Reading from the N-terminus, the 548-residue chain is Protein GPR108 (548 aa).

A signal peptide spans 1–32 (MAVSERRGLGRGSPAEWGPWLLLLLLLGGSSG). Asn57, Asn63, and Asn109 each carry an N-linked (GlcNAc...) asparagine glycan. The interval 165–190 (DHAGTTAAPDKAKSKPTGLQGDRQGV) is disordered. N-linked (GlcNAc...) asparagine glycosylation is found at Asn205 and Asn209. The next 7 helical transmembrane spans lie at 268-288 (LYMV…SILC), 297-317 (IHWL…FHSI), 341-361 (LLKG…WAFV), 372-392 (IFGI…VMES), 406-426 (ILFL…VWSI), 454-474 (VMVI…RAVV), and 478-498 (WQWL…VLTG). Asn539 is a glycosylation site (N-linked (GlcNAc...) asparagine).

This sequence belongs to the LU7TM family.

It localises to the golgi apparatus. Its subcellular location is the cis-Golgi network membrane. The protein localises to the trans-Golgi network membrane. It is found in the golgi apparatus membrane. In terms of biological role, may play a role in intracellular immune modulation by activating NF-kappaB response and attenuating Toll-like-receptor response. The polypeptide is Protein GPR108 (GPR108) (Bos taurus (Bovine)).